The sequence spans 161 residues: Nucleotide-binding protein BamMC406_2474 (161 aa).

The protein belongs to the YajQ family.

Functionally, nucleotide-binding protein. In Burkholderia ambifaria (strain MC40-6), this protein is Nucleotide-binding protein BamMC406_2474.